A 289-amino-acid polypeptide reads, in one-letter code: Purine nucleoside phosphorylase (289 aa).

Position 1 is an N-acetylmethionine (Met-1). Phosphate is bound by residues Ser-33, His-64, and Arg-84–His-86. Residue Tyr-88 participates in a purine D-ribonucleoside binding. A phosphate-binding site is contributed by Ala-116. A purine D-ribonucleoside-binding residues include Glu-201 and Met-219. Ser-220 contributes to the phosphate binding site. A purine D-ribonucleoside contacts are provided by Asn-243 and His-257.

Belongs to the PNP/MTAP phosphorylase family. As to quaternary structure, homotrimer.

It is found in the cytoplasm. The catalysed reaction is inosine + phosphate = alpha-D-ribose 1-phosphate + hypoxanthine. It catalyses the reaction guanosine + phosphate = alpha-D-ribose 1-phosphate + guanine. The enzyme catalyses 2'-deoxyguanosine + phosphate = 2-deoxy-alpha-D-ribose 1-phosphate + guanine. It carries out the reaction 2'-deoxyinosine + phosphate = 2-deoxy-alpha-D-ribose 1-phosphate + hypoxanthine. Its pathway is purine metabolism; purine nucleoside salvage. Catalyzes the phosphorolytic breakdown of the N-glycosidic bond in the beta-(deoxy)ribonucleoside molecules, with the formation of the corresponding free purine bases and pentose-1-phosphate. Preferentially acts on 6-oxopurine nucleosides including inosine and guanosine. The protein is Purine nucleoside phosphorylase (Pnp) of Rattus norvegicus (Rat).